The sequence spans 185 residues: Photosystem I assembly protein Ycf4 (185 aa).

Transmembrane regions (helical) follow at residues 24–44 (YIIG…SISS) and 58–78 (ALLF…ANLL).

It belongs to the Ycf4 family.

The protein localises to the cellular thylakoid membrane. Functionally, seems to be required for the assembly of the photosystem I complex. In Prochlorococcus marinus (strain MIT 9215), this protein is Photosystem I assembly protein Ycf4.